The primary structure comprises 142 residues: MTIERTFSIVKPNAVAKNAIGAIYARFESAGFTIVASKMLRLSREQAEGFYAEHKGKPFFDGLVEFMMSGPIMVQALEGENAVQRNRDIMGATNPANALAGTLRADYADSFTANAVHGSDSIESAQREIAYFFSDDEICPRA.

ATP contacts are provided by Lys11, Phe59, Arg87, Thr93, Arg104, and Asn114. The active-site Pros-phosphohistidine intermediate is His117.

Belongs to the NDK family. Homotetramer. The cofactor is Mg(2+).

Its subcellular location is the cytoplasm. It carries out the reaction a 2'-deoxyribonucleoside 5'-diphosphate + ATP = a 2'-deoxyribonucleoside 5'-triphosphate + ADP. The enzyme catalyses a ribonucleoside 5'-diphosphate + ATP = a ribonucleoside 5'-triphosphate + ADP. Its function is as follows. Major role in the synthesis of nucleoside triphosphates other than ATP. The ATP gamma phosphate is transferred to the NDP beta phosphate via a ping-pong mechanism, using a phosphorylated active-site intermediate. This chain is Nucleoside diphosphate kinase, found in Pectobacterium atrosepticum (strain SCRI 1043 / ATCC BAA-672) (Erwinia carotovora subsp. atroseptica).